Consider the following 237-residue polypeptide: Large ribosomal subunit protein uL1 (237 aa).

It belongs to the universal ribosomal protein uL1 family. In terms of assembly, part of the 50S ribosomal subunit.

Binds directly to 23S rRNA. The L1 stalk is quite mobile in the ribosome, and is involved in E site tRNA release. Its function is as follows. Protein L1 is also a translational repressor protein, it controls the translation of the L11 operon by binding to its mRNA. This Myxococcus xanthus (strain DK1622) protein is Large ribosomal subunit protein uL1.